Consider the following 111-residue polypeptide: PCNA-associated factor (111 aa).

Ser8 bears the Phosphoserine mark. Lys15 is covalently cross-linked (Glycyl lysine isopeptide (Lys-Gly) (interchain with G-Cter in ubiquitin)). The D-box motif lies at 23–34; the sequence is RKVLGSSTSATN. The interval 23–111 is disordered; that stretch reads RKVLGSSTSA…QPDHTNDEKE (89 aa). At Lys24 the chain carries N6-acetyllysine; alternate. A Glycyl lysine isopeptide (Lys-Gly) (interchain with G-Cter in ubiquitin); alternate cross-link involves residue Lys24. Phosphoserine occurs at positions 28, 31, and 72. Residues 28–40 show a composition bias toward low complexity; the sequence is SSTSATNSTSVSS. A PIP-box motif is present at residues 62-72; the sequence is QKGIGEFFRLS. A compositionally biased stretch (basic and acidic residues) spans 72 to 81; that stretch reads SPKDSEKENQ. The KEN box signature appears at 78–80; that stretch reads KEN. The short motif at 85–97 is the Initiation motif element; sequence EAGSSGLGKAKRK.

In terms of assembly, interacts (when monoubiquitinated at Lys-15 and Lys-24) with PCNA. Interacts with isoform 2/p33ING1b of ING1. Interacts with BRCA1. In terms of processing, monoubiquitinated at Lys-15 and Lys-24 during normal S phase, promoting its association with PCNA. Also diubiquitinated at these 2 sites. Following DNA damage, monoubiquitin chains at Lys-15 and Lys-24 are probably extended, leading to disrupt the interaction with PCNA. Polyubiquitinated by the APC/C complex at the mitotic exit, leading to its degradation by the proteasome. Expressed predominantly in liver, pancreas and placenta. Not detected in heart or brain. Highly expressed in a number of tumors, especially esophageal tumors, in anaplastic thyroid carcinomas, adrenocortical carcinomas, and in non-small-cell lung cancer lines.

The protein resides in the nucleus. It localises to the cytoplasm. It is found in the perinuclear region. In terms of biological role, PCNA-binding protein that acts as a regulator of DNA repair during DNA replication. Following DNA damage, the interaction with PCNA is disrupted, facilitating the interaction between monoubiquitinated PCNA and the translesion DNA synthesis DNA polymerase eta (POLH) at stalled replisomes, facilitating the bypass of replication-fork-blocking lesions. Also acts as a regulator of centrosome number. The sequence is that of PCNA-associated factor from Homo sapiens (Human).